Reading from the N-terminus, the 494-residue chain is UDP-glucose 6-dehydrogenase (494 aa).

NAD(+) contacts are provided by residues glycine 11–glycine 16, aspartate 36, arginine 41, and valine 89–threonine 93. The tract at residues serine 88 to glutamate 110 is disordered. Lysine 107 is subject to N6-acetyllysine. The allosteric switch region stretch occupies residues lysine 129 to arginine 135. Serine 130–valine 132 contributes to the NAD(+) binding site. Catalysis depends on glutamate 161, which acts as the Proton donor/acceptor. Residues glutamate 161–glutamate 165, lysine 220–asparagine 224, arginine 260, and lysine 267–glycine 273 each bind substrate. Glutamate 165 lines the NAD(+) pocket. Lysine 220 serves as the catalytic Proton donor/acceptor. Cysteine 276 (nucleophile) is an active-site residue. Residue cysteine 276–lysine 279 coordinates NAD(+). The segment at serine 321 to threonine 325 is important for formation of active hexamer structure. Substrate is bound at residue phenylalanine 338–lysine 339. Arginine 346 contacts NAD(+). Arginine 442 contacts substrate. The interval valine 466–valine 494 is disordered. Serine 476 carries the phosphoserine modification.

This sequence belongs to the UDP-glucose/GDP-mannose dehydrogenase family. As to quaternary structure, homohexamer.

The enzyme catalyses UDP-alpha-D-glucose + 2 NAD(+) + H2O = UDP-alpha-D-glucuronate + 2 NADH + 3 H(+). It participates in nucleotide-sugar biosynthesis; UDP-alpha-D-glucuronate biosynthesis; UDP-alpha-D-glucuronate from UDP-alpha-D-glucose: step 1/1. Its activity is regulated as follows. UDP-alpha-D-xylose (UDX) acts as a feedback inhibitor. It binds at the same site as the substrate, but functions as allosteric inhibitor by triggering a conformation change that disrupts the active hexameric ring structure and gives rise to an inactive, horseshoe-shaped hexamer. Catalyzes the formation of UDP-alpha-D-glucuronate, a constituent of complex glycosaminoglycans. Required for the biosynthesis of chondroitin sulfate and heparan sulfate. Required for embryonic development via its role in the biosynthesis of glycosaminoglycans. Required for proper brain and neuronal development. The protein is UDP-glucose 6-dehydrogenase (UGDH) of Bos taurus (Bovine).